We begin with the raw amino-acid sequence, 375 residues long: S-adenosylmethionine:tRNA ribosyltransferase-isomerase (375 aa).

It belongs to the QueA family. Monomer.

Its subcellular location is the cytoplasm. The enzyme catalyses 7-aminomethyl-7-carbaguanosine(34) in tRNA + S-adenosyl-L-methionine = epoxyqueuosine(34) in tRNA + adenine + L-methionine + 2 H(+). It functions in the pathway tRNA modification; tRNA-queuosine biosynthesis. Transfers and isomerizes the ribose moiety from AdoMet to the 7-aminomethyl group of 7-deazaguanine (preQ1-tRNA) to give epoxyqueuosine (oQ-tRNA). The sequence is that of S-adenosylmethionine:tRNA ribosyltransferase-isomerase from Rickettsia typhi (strain ATCC VR-144 / Wilmington).